The following is a 162-amino-acid chain: Phosphopantetheine adenylyltransferase (162 aa).

S9 lines the substrate pocket. ATP is bound by residues 9 to 10 (SF) and H17. Substrate-binding residues include K41, L73, and K87. ATP-binding positions include 88 to 90 (GLR), E98, and 123 to 129 (YAHLSSS).

Belongs to the bacterial CoaD family. As to quaternary structure, homohexamer. It depends on Mg(2+) as a cofactor.

Its subcellular location is the cytoplasm. The catalysed reaction is (R)-4'-phosphopantetheine + ATP + H(+) = 3'-dephospho-CoA + diphosphate. It functions in the pathway cofactor biosynthesis; coenzyme A biosynthesis; CoA from (R)-pantothenate: step 4/5. Reversibly transfers an adenylyl group from ATP to 4'-phosphopantetheine, yielding dephospho-CoA (dPCoA) and pyrophosphate. The polypeptide is Phosphopantetheine adenylyltransferase (Symbiobacterium thermophilum (strain DSM 24528 / JCM 14929 / IAM 14863 / T)).